We begin with the raw amino-acid sequence, 394 residues long: MWVPGAGIPSRLTLSAFTRAARFCVLNSGVARWKDVPAENCRGLYDFHTQLKPDVEFGKLSSRLYKSRSETKRYVTSPRVAETVVRVLRGKRKAGQLILECNPGPGVLTRALLESGARVIALESDKNFIPELKSLGNSVNGRLEVIYCDFFKLDPRNHGMVTPPVMTSDMLFQYLGVKAHPWKKGFPLKVVGILPAKTERNTLWKILHDLYSCSSVYKYGRAELNLFISEKECRKLTANPQTPALYQSLSVLGQTACGIKVLCTEPSSLFDTYAIKGELEKQRHRESLEQNLCFVQLTPHRNLFTGTLTPFNYDVFFHMLRQCFMKRNAKLIDHLPSLSPIDAVHILKQIKKKKDVRVVDMYPKDFLRLFETIECSKDDTCKWLYDEFMEDALS.

The transit peptide at 1–19 (MWVPGAGIPSRLTLSAFTR) directs the protein to the mitochondrion. Val75, Glu123, and Asp149 together coordinate S-adenosyl-L-methionine. A DNA-binding region spans residues 326-327 (KR).

Belongs to the class I-like SAM-binding methyltransferase superfamily. rRNA adenine N(6)-methyltransferase family. KsgA subfamily. Homodimer. Component of the mitochondrial transcription initiation complex, composed at least of TFB2M, TFAM and POLRMT. In this complex TFAM recruits POLRMT to the promoter whereas TFB2M induces structural changes in POLRMT to enable promoter opening and trapping of the DNA non-template strand. Interacts with mitochondrial RNA polymerase POLRMT. Interacts with TFAM.

It localises to the mitochondrion. The catalysed reaction is adenosine in rRNA + S-adenosyl-L-methionine = N(6)-methyladenosine in rRNA + S-adenosyl-L-homocysteine + H(+). S-adenosyl-L-methionine-dependent rRNA methyltransferase which may methylate two specific adjacent adenosines in the loop of a conserved hairpin near the 3'-end of 12S mitochondrial rRNA. Component of the mitochondrial transcription initiation complex, composed at least of TFB2M, TFAM and POLRMT that is required for basal transcription of mitochondrial DNA. In this complex TFAM recruits POLRMT to a specific promoter whereas TFB2M induces structural changes in POLRMT to enable promoter opening and trapping of the DNA non-template strand. Stimulates transcription independently of the methyltransferase activity. The polypeptide is Dimethyladenosine transferase 2, mitochondrial (Bos taurus (Bovine)).